A 142-amino-acid chain; its full sequence is Large ribosomal subunit protein uL13 (142 aa).

Belongs to the universal ribosomal protein uL13 family. In terms of assembly, part of the 50S ribosomal subunit.

This protein is one of the early assembly proteins of the 50S ribosomal subunit, although it is not seen to bind rRNA by itself. It is important during the early stages of 50S assembly. This chain is Large ribosomal subunit protein uL13, found in Bordetella bronchiseptica (strain ATCC BAA-588 / NCTC 13252 / RB50) (Alcaligenes bronchisepticus).